The primary structure comprises 430 residues: MGKNVVILGTQWGDEGKGKIVDLLTDQASLVARFQGGHNAGHTLVIDGKKTVLHLIPSGILREDVQCLIGNGVVLSLEALLKEIGGLEDQGVPVRDRLRLSASCPLILPVHVALDQAREAARGNKKIGTTGRGIGPAYEDKVARRGLRLGDVYQRELFAAKLGEVMDYHNFVLRSYYNAEPVDFQKTLDDTLQLGEDVRSMVTDVTAVLHGARERGENIMFEGAQGTLLDIDHGTYPYVTSSNTTAGGTATGTGFGPLYLDYVLGITKAYTTRVGSGPFPTELFDENGRYLAEKGHEFGSTTGRARRCGWFDAVALKRSIQINSITGLCLTKLDVLDGLEEINICVGYQDAAGNSLECAWDADSYEEVKPVYESLPGWSESTLGVKSEDDLPPNAKAYLKRIEAITGAPIDIISTGPDRVETIIKRHPFS.

Residues 13-19 (GDEGKGK) and 41-43 (GHT) contribute to the GTP site. Aspartate 14 (proton acceptor) is an active-site residue. Residues aspartate 14 and glycine 41 each coordinate Mg(2+). Residues 14 to 17 (DEGK), 39 to 42 (NAGH), threonine 130, arginine 144, glutamine 225, threonine 240, and arginine 304 contribute to the IMP site. Histidine 42 acts as the Proton donor in catalysis. 300 to 306 (STTGRAR) is a binding site for substrate. Residues arginine 306, 332–334 (KLD), and 414–416 (STG) contribute to the GTP site.

This sequence belongs to the adenylosuccinate synthetase family. In terms of assembly, homodimer. It depends on Mg(2+) as a cofactor.

It localises to the cytoplasm. The enzyme catalyses IMP + L-aspartate + GTP = N(6)-(1,2-dicarboxyethyl)-AMP + GDP + phosphate + 2 H(+). Its pathway is purine metabolism; AMP biosynthesis via de novo pathway; AMP from IMP: step 1/2. In terms of biological role, plays an important role in the de novo pathway of purine nucleotide biosynthesis. Catalyzes the first committed step in the biosynthesis of AMP from IMP. This is Adenylosuccinate synthetase from Alcanivorax borkumensis (strain ATCC 700651 / DSM 11573 / NCIMB 13689 / SK2).